The chain runs to 227 residues: Agamous-like MADS-box protein AGL8 homolog (227 aa).

The 55-residue stretch at 3–57 folds into the MADS-box domain; the sequence is RGRVQLKRIENKINRQVTFSKRRSGLLKKAHEISVLCDAEVGLIVFSTKGKLFEY. Residues 88 to 178 form the K-box domain; the sequence is PVSWTLEHRK…SKKVKEREKS (91 aa).

In terms of tissue distribution, flower specific.

Its subcellular location is the nucleus. Its function is as follows. Probable transcription factor. This Solanum lycopersicum (Tomato) protein is Agamous-like MADS-box protein AGL8 homolog (TDR4).